Reading from the N-terminus, the 870-residue chain is Leucine--tRNA ligase (870 aa).

The short motif at 43-53 (PYPSGRIHMGH) is the 'HIGH' region element. A 'KMSKS' region motif is present at residues 630-634 (KMSKS). K633 lines the ATP pocket.

It belongs to the class-I aminoacyl-tRNA synthetase family.

The protein localises to the cytoplasm. The enzyme catalyses tRNA(Leu) + L-leucine + ATP = L-leucyl-tRNA(Leu) + AMP + diphosphate. This Parvibaculum lavamentivorans (strain DS-1 / DSM 13023 / NCIMB 13966) protein is Leucine--tRNA ligase.